The sequence spans 187 residues: Elongation factor P (187 aa).

The protein belongs to the elongation factor P family.

Its subcellular location is the cytoplasm. The protein operates within protein biosynthesis; polypeptide chain elongation. Functionally, involved in peptide bond synthesis. Stimulates efficient translation and peptide-bond synthesis on native or reconstituted 70S ribosomes in vitro. Probably functions indirectly by altering the affinity of the ribosome for aminoacyl-tRNA, thus increasing their reactivity as acceptors for peptidyl transferase. This is Elongation factor P from Corynebacterium glutamicum (strain R).